The following is a 302-amino-acid chain: MEFHLEHPLSHSSLHNNFNDDTDYETLPHSLFLVEFQHMPSSHYFHSLKSSAFLLSNRNQAISSITQYSRKFDDPSLTYLAVNYLDRFLSSEDMPQSKPWILKLISLSCVSLSAKMRKPDMSVSDLPVEGEFFDAQMIERMENVILGALKWRMRSVTPFSFLAFFISLFELKEEDPLLLKHSLKSQTSDLTFSLQHDISFLEFKPSVIAGAALLFASFELCPLQFPCFSNRINQCTYVNKDELMECYKAIQERDIIVGENEGSTETAVNVLDQQFSSCESDKSITITASSSPKRRKTSTRRY.

The protein belongs to the cyclin family. Cyclin D subfamily.

The sequence is that of Putative cyclin-D6-1 (CYCD6-1) from Arabidopsis thaliana (Mouse-ear cress).